The sequence spans 183 residues: Efficient mitochondria targeting-associated protein 19 (183 aa).

Residues 1-25 (MKVVSLRRIYSSEIYKLPTTRLHMD) are Cytoplasmic-facing. Residues 24–156 (MDTLYYYYFV…PYLAIPLWMA (133 aa)) enclose the EXPERA domain. Residues 26–46 (TLYYYYFVSHLAAALFVDLPI) traverse the membrane as a helical segment. The Lumenal portion of the chain corresponds to 47–81 (TEWLGGSLSCLSGLRRFYLSTYEDPILLIPAPWKT). Residues 82–102 (ALFSSELFFQVPFFIWVSLRL) traverse the membrane as a helical segment. The Cytoplasmic portion of the chain corresponds to 103–110 (RKKARDPV). The chain crosses the membrane as a helical span at residues 111-131 (LWVAILIYGVHAFTTTWCCMF). Residues 132 to 138 (ELFAEKK) are Lumenal-facing. Residues 139 to 159 (WMIMSFYFPYLAIPLWMAIDM) traverse the membrane as a helical segment. Over 160–183 (GGRLVKSCHAAKSGPSSTITSKSD) the chain is Cytoplasmic.

The protein belongs to the TMEM97/sigma-2 receptor family.

It localises to the endoplasmic reticulum membrane. Part of an import route for newly synthesized mitochondrial proteins termed the ER-SURF pathway (ER surface-mediated protein targeting), which retrieves mitochondrial precursor proteins from the ER surface and reroutes them to mitochondria for efficient mitochondrial import. Acts as a quality control factor in the ER, promoting the proteolytic degradation of nonproductive and extramitochondrial precursor proteins in the ER membrane thus removing them from the ER surface. This chain is Efficient mitochondria targeting-associated protein 19 (ema19), found in Schizosaccharomyces pombe (strain 972 / ATCC 24843) (Fission yeast).